The chain runs to 512 residues: Maturase K (512 aa).

It belongs to the intron maturase 2 family. MatK subfamily.

It localises to the plastid. The protein localises to the chloroplast. In terms of biological role, usually encoded in the trnK tRNA gene intron. Probably assists in splicing its own and other chloroplast group II introns. The sequence is that of Maturase K from Ginkgo biloba (Ginkgo).